The sequence spans 101 residues: Small ribosomal subunit protein uS14 (101 aa).

The span at 1–10 (MAKKSAIEKN) shows a compositional bias: basic and acidic residues. Residues 1–23 (MAKKSAIEKNNRRKKMTKNAAPK) form a disordered region. The segment covering 11–23 (NRRKKMTKNAAPK) has biased composition (basic residues).

In terms of assembly, part of the 30S ribosomal subunit. Contacts proteins S3 and S10.

Functionally, binds 16S rRNA, required for the assembly of 30S particles and may also be responsible for determining the conformation of the 16S rRNA at the A site. This chain is Small ribosomal subunit protein uS14, found in Rhodopseudomonas palustris (strain ATCC BAA-98 / CGA009).